Reading from the N-terminus, the 208-residue chain is Proheparin-binding EGF-like growth factor (208 aa).

The N-terminal stretch at 1–19 is a signal peptide; sequence MKLLPSVVLKLLLAAVLSA. Residues 20 to 62 constitute a propeptide that is removed on maturation; the sequence is LVTGESLEQLRRGLAAGTSNPDPSTGSTDQLLRLGGGRDRKVR. Topologically, residues 20–160 are extracellular; sequence LVTGESLEQL…ENRLYTYDHT (141 aa). Residues 34-55 are disordered; that stretch reads AAGTSNPDPSTGSTDQLLRLGG. Residues 36 to 49 are compositionally biased toward polar residues; that stretch reads GTSNPDPSTGSTDQ. 2 O-linked (GalNAc...) threonine glycosylation sites follow: Thr-75 and Thr-85. Positions 81 to 104 are disordered; the sequence is QALATPSKEEHGKRKKKGKGLGKK. The segment covering 93 to 102 has biased composition (basic residues); sequence KRKKKGKGLG. An EGF-like domain is found at 104-144; the sequence is KRDPCLRKYKDFCIHGECKYVKELRAPSCICHPGYHGERCH. Intrachain disulfides connect Cys-108–Cys-121, Cys-116–Cys-132, and Cys-134–Cys-143. The interval 136–148 is toxin-binding domain; that stretch reads PGYHGERCHGLSL. Positions 149–208 are cleaved as a propeptide — C-terminal; it reads PVENRLYTYDHTTILAVVAVVLSSVCLLVIVGLLMFRYHRRGGYDVENEEKVKLGMTNSH. Residues 161–184 form a helical membrane-spanning segment; it reads TILAVVAVVLSSVCLLVIVGLLMF. Topologically, residues 185-208 are cytoplasmic; it reads RYHRRGGYDVENEEKVKLGMTNSH.

As to quaternary structure, interacts with EGFR and ERBB4. Interacts with FBLN1. O-glycosylated.

It localises to the secreted. The protein localises to the extracellular space. It is found in the cell membrane. In terms of biological role, growth factor that mediates its effects via EGFR, ERBB2 and ERBB4. Required for normal cardiac valve formation and normal heart function. Promotes smooth muscle cell proliferation. May be involved in macrophage-mediated cellular proliferation. It is mitogenic for fibroblasts, but not endothelial cells. It is able to bind EGF receptor/EGFR with higher affinity than EGF itself and is a far more potent mitogen for smooth muscle cells than EGF. Also acts as a diphtheria toxin receptor. The chain is Proheparin-binding EGF-like growth factor (HBEGF) from Chlorocebus aethiops (Green monkey).